Reading from the N-terminus, the 1028-residue chain is Ubiquitin conjugation factor E4 A (1028 aa).

The disordered stretch occupies residues 33–57 (KEQLKQQSDELPASPDDSDNSVSES). Lysine 386 bears the N6-acetyllysine mark. Residues 949 to 1023 (DACDEFLDPI…QRWLAERKQQ (75 aa)) enclose the U-box domain.

This sequence belongs to the ubiquitin conjugation factor E4 family. In terms of tissue distribution, expressed in liver, heart, brain, kidney and testis.

It localises to the cytoplasm. It carries out the reaction S-ubiquitinyl-[E2 ubiquitin-conjugating enzyme]-L-cysteine + [acceptor protein]-L-lysine = [E2 ubiquitin-conjugating enzyme]-L-cysteine + N(6)-ubiquitinyl-[acceptor protein]-L-lysine.. It functions in the pathway protein modification; protein ubiquitination. Functionally, ubiquitin-protein ligase that probably functions as an E3 ligase in conjunction with specific E1 and E2 ligases. May also function as an E4 ligase mediating the assembly of polyubiquitin chains on substrates ubiquitinated by another E3 ubiquitin ligase. Mediates 'Lys-48'-linked polyubiquitination of substrates. This Mus musculus (Mouse) protein is Ubiquitin conjugation factor E4 A.